Consider the following 271-residue polypeptide: Formamidopyrimidine-DNA glycosylase (271 aa).

Pro2 serves as the catalytic Schiff-base intermediate with DNA. Glu3 serves as the catalytic Proton donor. Lys57 (proton donor; for beta-elimination activity) is an active-site residue. DNA is bound by residues His90, Arg109, and Lys150. The segment at 235–269 (LVYGNKDKPCPKCGGKIESLIIGQRNSFFCPKCQK) adopts an FPG-type zinc-finger fold. The active-site Proton donor; for delta-elimination activity is the Arg259.

This sequence belongs to the FPG family. Monomer. The cofactor is Zn(2+).

It carries out the reaction Hydrolysis of DNA containing ring-opened 7-methylguanine residues, releasing 2,6-diamino-4-hydroxy-5-(N-methyl)formamidopyrimidine.. The enzyme catalyses 2'-deoxyribonucleotide-(2'-deoxyribose 5'-phosphate)-2'-deoxyribonucleotide-DNA = a 3'-end 2'-deoxyribonucleotide-(2,3-dehydro-2,3-deoxyribose 5'-phosphate)-DNA + a 5'-end 5'-phospho-2'-deoxyribonucleoside-DNA + H(+). In terms of biological role, involved in base excision repair of DNA damaged by oxidation or by mutagenic agents. Acts as a DNA glycosylase that recognizes and removes damaged bases. Has a preference for oxidized purines, such as 7,8-dihydro-8-oxoguanine (8-oxoG). Has AP (apurinic/apyrimidinic) lyase activity and introduces nicks in the DNA strand. Cleaves the DNA backbone by beta-delta elimination to generate a single-strand break at the site of the removed base with both 3'- and 5'-phosphates. This Haemophilus influenzae (strain 86-028NP) protein is Formamidopyrimidine-DNA glycosylase.